Consider the following 174-residue polypeptide: NADH-ubiquinone oxidoreductase chain 6 (174 aa).

Transmembrane regions (helical) follow at residues 1–21 (MTYV…GFSS), 24–44 (SPIY…GIVL), 46–66 (FGGS…MLVV), 86–106 (VMIL…VVYM), and 151–171 (WLMV…IEIT).

Belongs to the complex I subunit 6 family. Core subunit of respiratory chain NADH dehydrogenase (Complex I) which is composed of 45 different subunits.

Its subcellular location is the mitochondrion inner membrane. The enzyme catalyses a ubiquinone + NADH + 5 H(+)(in) = a ubiquinol + NAD(+) + 4 H(+)(out). Functionally, core subunit of the mitochondrial membrane respiratory chain NADH dehydrogenase (Complex I) which catalyzes electron transfer from NADH through the respiratory chain, using ubiquinone as an electron acceptor. Essential for the catalytic activity and assembly of complex I. The sequence is that of NADH-ubiquinone oxidoreductase chain 6 (MT-ND6) from Oryctolagus cuniculus (Rabbit).